Consider the following 465-residue polypeptide: Clusterin-like protein 1 (465 aa).

An N-terminal signal peptide occupies residues 1–20 (MKPSLLVFTVYLLWLKDCHC). Positions 62-106 (MMERREEEHTNLMKTLKKCKEEKQEALKLMNEVQEHLEEEESLCQ) form a coiled coil. Disulfide bonds link Cys-105–Cys-333, Cys-116–Cys-325, Cys-119–Cys-322, and Cys-124–Cys-315. N-linked (GlcNAc...) asparagine glycans are attached at residues Asn-196, Asn-257, Asn-285, Asn-311, Asn-351, Asn-412, and Asn-430.

This sequence belongs to the clusterin family. As to expression, retina-specific (at protein level). In the light-adapted retina, expressed in the outer segment of cone photoreceptors. In the dark-adapted retina, strongly expressed in the outer plexiform layer in the region of contact between the cone pedicles and second order neurons with little or no expression in the cone photoreceptor outer segments.

It localises to the secreted. The sequence is that of Clusterin-like protein 1 (CLUL1) from Canis lupus familiaris (Dog).